The chain runs to 531 residues: Protein tweety homolog 2-like (531 aa).

Residues 1-44 (MASSRQDYIAPWWTYWLHNFPHLNFNFQTVDNTFKPEDASYQQS) are Extracellular-facing. The helical transmembrane segment at 45–65 (LVFLACVSAVALGLCLLLLSV) threads the bilayer. The Cytoplasmic portion of the chain corresponds to 66-87 (YLTCLCCCRREEDEEVKRPDTC). Residues 88 to 108 (CVTWAAVITGLVICSAVGVGF) traverse the membrane as a helical segment. Residues 109–213 (YGNSETNDGV…RTAFIEYYRW (105 aa)) lie on the Extracellular side of the membrane. N-linked (GlcNAc...) asparagine glycosylation occurs at asparagine 129. Residues 214-234 (LTYLLLLILDLVICLLACLAL) form a helical membrane-spanning segment. Topologically, residues 235–239 (AKQSR) are cytoplasmic. The chain crosses the membrane as a helical span at residues 240 to 260 (WLLTVIMVCGMLTLIMSWASL). Residues 261–389 (GAGTATAVGT…GVCYDGVEGL (129 aa)) lie on the Extracellular side of the membrane. N-linked (GlcNAc...) asparagine glycans are attached at residues asparagine 283 and asparagine 352. The chain crosses the membrane as a helical span at residues 390-410 (LYLCLFSLLAACAFCALLCAV). Topologically, residues 411-531 (PRAWMLIAIR…IRHFGTDFQV (121 aa)) are cytoplasmic.

The protein belongs to the tweety family.

Its subcellular location is the cell membrane. In terms of biological role, probable large-conductance Ca(2+)-activated chloride channel. This is Protein tweety homolog 2-like (ttyh2l) from Danio rerio (Zebrafish).